The primary structure comprises 710 residues: Iron-sulfur clusters transporter ATM1, mitochondrial (710 aa).

The transit peptide at Met1–Ser38 directs the protein to the mitochondrion. The span at Pro35 to Pro52 shows a compositional bias: polar residues. Residues Pro35–Ala83 are disordered. The Mitochondrial matrix portion of the chain corresponds to Asn39–Arg129. The helical transmembrane segment at Val130–Phe151 threads the bilayer. The ABC transmembrane type-1 domain maps to Val130–Gln419. Topologically, residues Lys152 to Thr173 are mitochondrial intermembrane. A helical transmembrane segment spans residues Ala174–Phe197. Residues Ala198–Val246 are Mitochondrial matrix-facing. Residues Leu247–Tyr270 traverse the membrane as a helical segment. Position 271 (Asn271) is a topological domain, mitochondrial intermembrane. The chain crosses the membrane as a helical span at residues Phe272–Ile292. The Mitochondrial matrix portion of the chain corresponds to Thr293–Ala358. Glutathione-binding positions include Arg298–Arg302 and Asn361–Gln364. The helical transmembrane segment at Phe359 to Tyr377 threads the bilayer. Residues Met378 to Asp392 are Mitochondrial intermembrane-facing. A helical transmembrane segment spans residues Leu393 to Tyr414. Gly411 serves as a coordination point for glutathione. Residues Arg415–Val710 lie on the Mitochondrial matrix side of the membrane. The region spanning Ile453–Ala687 is the ABC transporter domain. Residues Tyr462 and Gly486–Lys497 contribute to the ATP site.

Belongs to the ABC transporter superfamily. ABCB family. Heavy Metal importer (TC 3.A.1.210) subfamily. Homodimer.

Its subcellular location is the mitochondrion inner membrane. Functionally, performs an essential function in the generation of cytoplasmic iron-sulfur proteins by mediating the ATP-dependent export of Fe/S cluster precursors synthesized by NFS1 and other mitochondrial proteins. Hydrolyzes ATP. Binds glutathione and may function by transporting a glutathione-conjugated iron-sulfur compound. The protein is Iron-sulfur clusters transporter ATM1, mitochondrial of Yarrowia lipolytica (strain CLIB 122 / E 150) (Yeast).